The primary structure comprises 245 residues: rRNA adenine N-6-methyltransferase (245 aa).

6 residues coordinate S-adenosyl-L-methionine: asparagine 10, leucine 12, glycine 37, glutamate 58, aspartate 83, and asparagine 100.

The protein belongs to the class I-like SAM-binding methyltransferase superfamily. rRNA adenine N(6)-methyltransferase family.

The catalysed reaction is adenosine(2085) in 23S rRNA + 2 S-adenosyl-L-methionine = N(6)-dimethyladenosine(2085) in 23S rRNA + 2 S-adenosyl-L-homocysteine + 2 H(+). Its function is as follows. This protein produces a dimethylation of the adenine residue at position 2085 in 23S rRNA, resulting in reduced affinity between ribosomes and macrolide-lincosamide-streptogramin B antibiotics. The sequence is that of rRNA adenine N-6-methyltransferase (ermB) from Enterococcus faecalis (strain ATCC 700802 / V583).